A 208-amino-acid chain; its full sequence is V-type ATP synthase subunit E (208 aa).

It belongs to the V-ATPase E subunit family.

Its function is as follows. Produces ATP from ADP in the presence of a proton gradient across the membrane. The polypeptide is V-type ATP synthase subunit E (atpE) (Chlamydia muridarum (strain MoPn / Nigg)).